A 487-amino-acid polypeptide reads, in one-letter code: Bifunctional protein HldE (487 aa).

A ribokinase region spans residues 1 to 326 (MERREVESFF…QEIVAEVGHG (326 aa)). 205–208 (NRKE) provides a ligand contact to ATP. Residue Asp-275 is part of the active site. The tract at residues 356–487 (FTNGCFDLLH…RIIEKILSSY (132 aa)) is cytidylyltransferase.

The protein in the N-terminal section; belongs to the carbohydrate kinase PfkB family. It in the C-terminal section; belongs to the cytidylyltransferase family. Homodimer.

The enzyme catalyses D-glycero-beta-D-manno-heptose 7-phosphate + ATP = D-glycero-beta-D-manno-heptose 1,7-bisphosphate + ADP + H(+). It carries out the reaction D-glycero-beta-D-manno-heptose 1-phosphate + ATP + H(+) = ADP-D-glycero-beta-D-manno-heptose + diphosphate. It participates in nucleotide-sugar biosynthesis; ADP-L-glycero-beta-D-manno-heptose biosynthesis; ADP-L-glycero-beta-D-manno-heptose from D-glycero-beta-D-manno-heptose 7-phosphate: step 1/4. Its pathway is nucleotide-sugar biosynthesis; ADP-L-glycero-beta-D-manno-heptose biosynthesis; ADP-L-glycero-beta-D-manno-heptose from D-glycero-beta-D-manno-heptose 7-phosphate: step 3/4. In terms of biological role, catalyzes the phosphorylation of D-glycero-D-manno-heptose 7-phosphate at the C-1 position to selectively form D-glycero-beta-D-manno-heptose-1,7-bisphosphate. Its function is as follows. Catalyzes the ADP transfer from ATP to D-glycero-beta-D-manno-heptose 1-phosphate, yielding ADP-D-glycero-beta-D-manno-heptose. The chain is Bifunctional protein HldE from Citrifermentans bemidjiense (strain ATCC BAA-1014 / DSM 16622 / JCM 12645 / Bem) (Geobacter bemidjiensis).